We begin with the raw amino-acid sequence, 193 residues long: MHEYALLLLSTALVNNVVLVKFLGLCPAMGVSKSMDAALGMGLATTFVITLAAAASWMLEHWLLAPFDLGFLRILSFILVIAAAVQFTEMAIRKMSPALYQSLGIYLPLITTNCAVLGVALLNVQQGYGFFKSVLFGFGSALGFTLVLLIFAGLRERLALASVPAAFAGAPAAFITISLLSLAFMGLSGLVAT.

The next 6 helical transmembrane spans lie at 5 to 25, 39 to 59, 62 to 82, 102 to 122, 134 to 154, and 172 to 192; these read ALLL…FLGL, LGMG…SWML, WLLA…LVIA, SLGI…VALL, VLFG…FAGL, and AAFI…GLVA.

Belongs to the NqrDE/RnfAE family. In terms of assembly, the complex is composed of six subunits: RnfA, RnfB, RnfC, RnfD, RnfE and RnfG.

The protein localises to the cell inner membrane. In terms of biological role, part of a membrane-bound complex that couples electron transfer with translocation of ions across the membrane. The protein is Ion-translocating oxidoreductase complex subunit A of Aromatoleum aromaticum (strain DSM 19018 / LMG 30748 / EbN1) (Azoarcus sp. (strain EbN1)).